Consider the following 68-residue polypeptide: Lipopolysaccharide export system ATP-binding protein LptB (68 aa).

This sequence belongs to the ABC transporter superfamily. Outer membrane lipopolysaccharide export (TC 1.B.42) family. Component of the lipopolysaccharide transport and assembly complex. The LptBFG transporter is composed of two ATP-binding proteins (LptB) and two transmembrane proteins (LptF and LptG).

It localises to the cytoplasm. The protein localises to the cell inner membrane. Its function is as follows. Part of the ABC transporter complex LptBFG involved in the translocation of lipopolysaccharide (LPS) from the inner membrane to the outer membrane. Probably responsible for energy coupling to the transport system. This Klebsiella oxytoca protein is Lipopolysaccharide export system ATP-binding protein LptB (lptB).